Reading from the N-terminus, the 246-residue chain is MTSLGVNIDHIANIRQARLANEPDPVQMALLAELGGADGITIHLREDRRHIQDRDLKLLRETIKSRLNLEMAATTEMIEIALDLKPDMITLVPERREEITTEGGLDVASNAKSLKEIVTKMESCCIPTSLFVDANSKQLEASSKIGATWVELHTGPYARASWKNQPLEFAKISEGVARARNLGLRVNAGHGLTYQNVEPIASITEMEELNIGHTIIARAIAIGLKEAVKEMKELIKNPRHEPFFGS.

Residue N7 coordinates 3-amino-2-oxopropyl phosphate. 9–10 (DH) is a binding site for 1-deoxy-D-xylulose 5-phosphate. Residue R18 participates in 3-amino-2-oxopropyl phosphate binding. H43 functions as the Proton acceptor in the catalytic mechanism. 1-deoxy-D-xylulose 5-phosphate is bound by residues R45 and H50. The active-site Proton acceptor is E70. T100 lines the 1-deoxy-D-xylulose 5-phosphate pocket. H190 serves as the catalytic Proton donor. Residues G191 and 212–213 (GH) contribute to the 3-amino-2-oxopropyl phosphate site.

Belongs to the PNP synthase family. As to quaternary structure, homooctamer; tetramer of dimers.

The protein resides in the cytoplasm. It carries out the reaction 3-amino-2-oxopropyl phosphate + 1-deoxy-D-xylulose 5-phosphate = pyridoxine 5'-phosphate + phosphate + 2 H2O + H(+). The protein operates within cofactor biosynthesis; pyridoxine 5'-phosphate biosynthesis; pyridoxine 5'-phosphate from D-erythrose 4-phosphate: step 5/5. Functionally, catalyzes the complicated ring closure reaction between the two acyclic compounds 1-deoxy-D-xylulose-5-phosphate (DXP) and 3-amino-2-oxopropyl phosphate (1-amino-acetone-3-phosphate or AAP) to form pyridoxine 5'-phosphate (PNP) and inorganic phosphate. The protein is Pyridoxine 5'-phosphate synthase of Prochlorococcus marinus (strain SARG / CCMP1375 / SS120).